The primary structure comprises 87 residues: Small ribosomal subunit protein uS17 (87 aa).

It belongs to the universal ribosomal protein uS17 family. Part of the 30S ribosomal subunit.

In terms of biological role, one of the primary rRNA binding proteins, it binds specifically to the 5'-end of 16S ribosomal RNA. In Bacillus thuringiensis (strain Al Hakam), this protein is Small ribosomal subunit protein uS17.